A 79-amino-acid polypeptide reads, in one-letter code: Mycoredoxin 1 (79 aa).

The 79-residue stretch at 1–79 (MSNVTIYATD…EVIAKIEALA (79 aa)) folds into the Glutaredoxin domain.

It belongs to the glutaredoxin family.

The protein localises to the cytoplasm. It carries out the reaction [mycoredoxin]-L-cysteine + arseno-mycothiol + H(+) = [mycoredoxin]-S-mycothiol-L-cysteine + arsenite. Functionally, involved in defense against toxic arsenate. Involved in the mycothiol/myoredoxin redox pathway which uses a mycothioltransferase mechanism; functions as a monothiol mixed disulfide reductase and is recycled by a second mycothiol forming mycothione which in turn is reduced in a NADPH-dependent manner. In Corynebacterium glutamicum (strain ATCC 13032 / K051), this protein is Mycoredoxin 1 (mrx1).